We begin with the raw amino-acid sequence, 323 residues long: MIEFSNFYQLIAKNHLSHWLETLPAQVAAWQREQLHGKFKQWSNAVEFLPEMTPYKLDLLHSVTAESEEPLSDGQLLRLDKLMRNLMPWRKGPFSLYGLNIDTEWRSDWKWDRVLPHLSDLTGRTILDVGCGSGYHMWRMIGAGAHLAVGIDPMQLFLCQFEAVRKLLGNDQRAHLLPLGIEQLPALAAFDTVFSMGVLYHRRSPLEHLWQLKDQLVNGGELVLETLVIEGDENAVLVPGDRYAQMRNVYFIPSALALKNWLEKCGFVDVRIADVCVTSTEEQRRTEWLTTESLAEFLDPNDSTKTIEGYPAPMRAVLIATKP.

Residues Lys-91, Trp-105, Lys-110, Gly-130, 181–182 (IE), Met-196, Tyr-200, and Arg-315 each bind carboxy-S-adenosyl-L-methionine.

Belongs to the class I-like SAM-binding methyltransferase superfamily. CmoB family. Homotetramer.

It catalyses the reaction carboxy-S-adenosyl-L-methionine + 5-hydroxyuridine(34) in tRNA = 5-carboxymethoxyuridine(34) in tRNA + S-adenosyl-L-homocysteine + H(+). In terms of biological role, catalyzes carboxymethyl transfer from carboxy-S-adenosyl-L-methionine (Cx-SAM) to 5-hydroxyuridine (ho5U) to form 5-carboxymethoxyuridine (cmo5U) at position 34 in tRNAs. This Enterobacter sp. (strain 638) protein is tRNA U34 carboxymethyltransferase.